Reading from the N-terminus, the 46-residue chain is MKKKISLSCSLCKNRNYKTNKSVQSRLQINKFCKICRKSTLHQEEK.

This sequence belongs to the bacterial ribosomal protein bL33 family.

The polypeptide is Large ribosomal subunit protein bL33A (Mesomycoplasma hyopneumoniae (strain 7448) (Mycoplasma hyopneumoniae)).